The sequence spans 352 residues: Lipid storage droplets surface-binding protein 2 (352 aa).

Disordered stretches follow at residues 1-28 (MASA…DQPK) and 298-352 (NVEQ…VSSQ). A compositionally biased stretch (polar residues) spans 298 to 309 (NVEQSGGSSSDA). Positions 315-329 (TTTSTTTTTTTSSTS) are enriched in low complexity.

This sequence belongs to the perilipin family. As to expression, ubiquitous expression in early embryos. At stage 5 expression is restricted to the pole cells. At stage 11 expression is seen in the amnioserosa, refined to the fat body and midgut by stage 14. Also seen in the hindgut by the end of embryogenesis. Expression is seen in larval fat body (at protein level).

The protein resides in the cytoplasm. The protein localises to the lipid droplet. Essential for embryogenesis. Required for normal deposition of neutral lipids in the oocyte. This chain is Lipid storage droplets surface-binding protein 2, found in Drosophila melanogaster (Fruit fly).